The chain runs to 385 residues: Tryptophan--tRNA ligase (385 aa).

A 'HIGH' region motif is present at residues 82-90 (PSGPMHIGH). A 'KMSKS' region motif is present at residues 253–257 (KMSAS).

Belongs to the class-I aminoacyl-tRNA synthetase family.

Its subcellular location is the cytoplasm. The catalysed reaction is tRNA(Trp) + L-tryptophan + ATP = L-tryptophyl-tRNA(Trp) + AMP + diphosphate + H(+). In Pyrococcus abyssi (strain GE5 / Orsay), this protein is Tryptophan--tRNA ligase.